The sequence spans 501 residues: Mitochondrial inner membrane i-AAA protease supercomplex subunit MGR3 (501 aa).

Topologically, residues M1–R77 are mitochondrial matrix. Residues R39 to L72 form a disordered region. Residues S78 to F95 form a helical membrane-spanning segment. The Mitochondrial intermembrane segment spans residues K96–N501. 4 TPR repeats span residues Q109–S144, T154–A187, G386–N420, and A440–T473.

Belongs to the MGR3 family. Component of the mitochondrial inner membrane i-AAA protease supercomplex composed of MGR1, MGR3 and YME1. With MGR1, forms a subcomplex that binds to YME1 and to substrates to facilitate proteolysis.

The protein localises to the mitochondrion inner membrane. Functionally, component of the mitochondrial inner membrane i-AAA protease supercomplex, which degrades misfolded mitochondrial proteins. Together with MGR1, functions in an adapter complex that targets substrates to the i-AAA protease for degradation. Required for growth of cells lacking the mitochondrial genome. The chain is Mitochondrial inner membrane i-AAA protease supercomplex subunit MGR3 (MGR3) from Saccharomyces cerevisiae (strain ATCC 204508 / S288c) (Baker's yeast).